The following is a 171-amino-acid chain: Peptide deformylase (171 aa).

Fe cation contacts are provided by Cys91 and His133. Residue Glu134 is part of the active site. His137 serves as a coordination point for Fe cation.

Belongs to the polypeptide deformylase family. Fe(2+) serves as cofactor.

It carries out the reaction N-terminal N-formyl-L-methionyl-[peptide] + H2O = N-terminal L-methionyl-[peptide] + formate. In terms of biological role, removes the formyl group from the N-terminal Met of newly synthesized proteins. Requires at least a dipeptide for an efficient rate of reaction. N-terminal L-methionine is a prerequisite for activity but the enzyme has broad specificity at other positions. This is Peptide deformylase from Cronobacter sakazakii (strain ATCC BAA-894) (Enterobacter sakazakii).